We begin with the raw amino-acid sequence, 374 residues long: Translocating chain-associated membrane protein 1 (374 aa).

The Cytoplasmic segment spans residues 1–29; it reads MAIRKKSTKSPPVLSHEFVLQNHADIVSC. Residues 30 to 50 form a helical membrane-spanning segment; the sequence is VAMVFLLGLMFEITAKASIIF. At 51–76 the chain is on the lumenal side; that stretch reads VTLQYNVTLPATEEQATESVSLYYYG. An N-linked (GlcNAc...) asparagine glycan is attached at Asn56. The helical transmembrane segment at 77–97 threads the bilayer; that stretch reads IKDLATVFFYMLVAIIIHAVI. Topologically, residues 98–121 are cytoplasmic; it reads QEYMLDKINRRMHFSKTKHSKFNE. The TLC domain maps to 117-326; that stretch reads SKFNESGQLS…NFQLRRWREH (210 aa). The chain crosses the membrane as a helical span at residues 122–142; that stretch reads SGQLSAFYLFACVWGTFILIS. Residues 143–159 lie on the Lumenal side of the membrane; the sequence is ENYISDPTILWRAYPHN. The chain crosses the membrane as a helical span at residues 160 to 180; it reads LMTFQMKFFYISQLAYWLHAF. Residues 181 to 192 lie on the Cytoplasmic side of the membrane; that stretch reads PELYFQKTKKED. Residues 193–213 traverse the membrane as a helical segment; the sequence is IPRQLVYIGLYLFHIAGAYLL. At 214–217 the chain is on the lumenal side; it reads NLNH. Residues 218–238 form a helical membrane-spanning segment; that stretch reads LGLVLLVLHYFVEFLFHISRL. Topologically, residues 239 to 251 are cytoplasmic; it reads FYFSNEKYQKGFS. A helical transmembrane segment spans residues 252–272; the sequence is LWAVLFVLGRLLTLILSVLTV. At 273–297 the chain is on the lumenal side; that stretch reads GFGLARAENQKLDFSTGNFNVLAVR. Residues 298–318 form a helical membrane-spanning segment; that stretch reads IAVLASICVTQAFMMWKFINF. Over 319 to 374 the chain is Cytoplasmic; it reads QLRRWREHSAFQAPAVKKKPTVTKGRSSKKGTENGVNGTLTSNVADSPRNKKEKSS. The span at 334–347 shows a compositional bias: basic residues; that stretch reads VKKKPTVTKGRSSK. The tract at residues 334–374 is disordered; sequence VKKKPTVTKGRSSKKGTENGVNGTLTSNVADSPRNKKEKSS. Polar residues predominate over residues 352 to 363; the sequence is NGVNGTLTSNVA. A Phosphoserine modification is found at Ser365.

It belongs to the TRAM family. As to quaternary structure, interacts with SEC61B. May interact with Derlin-1/DERL1. (Microbial infection) Interacts with human cytomegalovirus/HHV-5 proteins US2 and US11. N-glycosylated.

Its subcellular location is the endoplasmic reticulum membrane. Its function is as follows. Involved in the translocation of nascent protein chains into or through the endoplasmic reticulum (ER) membrane by facilitating the proper chain positioning at the SEC61 channel. Regulates the exposure of nascent secretory protein chain to the cytosol during translocation into the ER. May affect the phospholipid bilayer in the vicinity of the lateral gate of the SEC61 channel, thereby facilitating ER protein transport. Intimately associates with transmembrane (TM) domain of nascent membrane proteins during the entire integration process into the ER membrane. Associates with the second TM domain of G-protein-coupled receptor opsin/OPSD nascent chain in the ER membrane, which may facilitate its integration into the membrane. Under conditions of ER stress, participates in the disposal of misfolded ER membrane proteins during the unfolded protein response (UPR), an integrated stress response (ISR) pathway, by selectively retrotranslocating misfolded ER-membrane proteins from the ER into the cytosol where they are ubiquitinated and degraded by the proteasome. (Microbial infection) In case of cytomegalovirus infection, participates in US2- and US11-mediated ER-to-cytosol retrotranslocation and subsequent degradation of major histocompatibility complex (MHC) class I heavy chains, thereby decreasing the immune detection by cytotoxic T-cells. The sequence is that of Translocating chain-associated membrane protein 1 from Homo sapiens (Human).